We begin with the raw amino-acid sequence, 232 residues long: Thiamine import ATP-binding protein ThiQ (232 aa).

In terms of domain architecture, ABC transporter spans 2–230; that stretch reads LKLTDITWLY…KASASAILGI (229 aa). 32-39 provides a ligand contact to ATP; sequence GPSGAGKS.

Belongs to the ABC transporter superfamily. Thiamine importer (TC 3.A.1.19.1) family. The complex is composed of two ATP-binding proteins (ThiQ), two transmembrane proteins (ThiP) and a solute-binding protein (ThiB).

The protein localises to the cell inner membrane. The enzyme catalyses thiamine(out) + ATP + H2O = thiamine(in) + ADP + phosphate + H(+). Its function is as follows. Part of the ABC transporter complex ThiBPQ involved in thiamine import. Responsible for energy coupling to the transport system. The protein is Thiamine import ATP-binding protein ThiQ of Shigella boydii serotype 4 (strain Sb227).